The following is a 379-amino-acid chain: Dual-specificity RNA methyltransferase RlmN (379 aa).

Residue E96 is the Proton acceptor of the active site. The 241-residue stretch at 102-342 folds into the Radical SAM core domain; sequence TDDRGTLCVS…TRTTRGDDID (241 aa). C109 and C345 form a disulfide bridge. C116, C120, and C123 together coordinate [4Fe-4S] cluster. S-adenosyl-L-methionine is bound by residues 170–171, S202, 224–226, and N302; these read GE and SLH. C345 acts as the S-methylcysteine intermediate in catalysis.

This sequence belongs to the radical SAM superfamily. RlmN family. The cofactor is [4Fe-4S] cluster.

It localises to the cytoplasm. It carries out the reaction adenosine(2503) in 23S rRNA + 2 reduced [2Fe-2S]-[ferredoxin] + 2 S-adenosyl-L-methionine = 2-methyladenosine(2503) in 23S rRNA + 5'-deoxyadenosine + L-methionine + 2 oxidized [2Fe-2S]-[ferredoxin] + S-adenosyl-L-homocysteine. The enzyme catalyses adenosine(37) in tRNA + 2 reduced [2Fe-2S]-[ferredoxin] + 2 S-adenosyl-L-methionine = 2-methyladenosine(37) in tRNA + 5'-deoxyadenosine + L-methionine + 2 oxidized [2Fe-2S]-[ferredoxin] + S-adenosyl-L-homocysteine. In terms of biological role, specifically methylates position 2 of adenine 2503 in 23S rRNA and position 2 of adenine 37 in tRNAs. m2A2503 modification seems to play a crucial role in the proofreading step occurring at the peptidyl transferase center and thus would serve to optimize ribosomal fidelity. The polypeptide is Dual-specificity RNA methyltransferase RlmN (Pseudomonas entomophila (strain L48)).